A 972-amino-acid chain; its full sequence is MGSYLGKAGSSPRSPAQGRADSGEKPASRRPARPLYQVHRVQHVHRAQPARRHRPARRPPNWDPANPTAFVSEAWRRFPMKRPQNPIMGSLPSDWWESYLKRNIWSLRHPRATWSPVTVKISPPERRPRPLFPVSRVVNSAGPSEEPPGPCGKDPVLRALLQCRKGRARWEEPLFPDTSDSQRHSASVWSAFKPLLKSGATVSFVARPGSLKRRPHVQSSDDKCKRSGCFSGALVASIHTQGPPSTKRNAITSSYSSSRELSGSWKRHFLRTLVQTPEWPLKKAGESPNSHLSVTPSSSGQLNGEIPLLQSGPRDLLTIPCQQGPVVTEEDPTLEGQAVPSNQTTEATTGTAGDSIPEMRAGIQPTLSLSRSSSERVLSTHVNPQLESLKNMPAPLGCSQLEHIQGISSDSNPSIASTQASPSSPTTPVTDSTWLSSIPRAHRSAVPPHSSVINPTAPTTQSTLVGVVSNPILHLPASVLPVETSSHLALRPIWGPVHSTEVRTASYSRISVMAEASSSSSPSTTPGILRPTFKPIFGSIEPLQTMSETAPVHTRQPSSSLSSDSTHLFHSLATTAPCVVTSVIPASKSKDPGVDLNIVTSTTGNSCSVPSCSTFLLGASQNFPSATDLIFPSQHPTIPTVHTVTIFSQVLTSAIKISPLRSTDTLKGVSNPLATLGLSSTNQPPVTSSNSNVTSALTSSLGSSPKPLLPPSQRNTSQSSPGAIDGLKQSSLQLAPAQSFSTSFLSENSGVSPTPSAQLVLSKTTQPACGQLTSSAPIIHTPATSQTGFGSTLAGFPFGKASSTALRVIRQNHQSVTYSSVFGSTAPRPFAFGGLVMPMDCGEPEVIVAAPKRSTSGTRQSMTPSTLAPFVQCWNQSMQGPPNQITPLAGIPARKIMSGAPSLVPFAQSIPVPGAIKAGSSLGFGMSSPTVQGSVGRNPLRSLEPSFCIGTKSKTLRNREPGRSRKHHTYKK.

Disordered regions lie at residues 1 to 67 (MGSY…PANP), 281 to 302 (LKKA…SGQL), 328 to 359 (TEED…IPEM), 406 to 431 (GISS…PVTD), 676 to 726 (LGLS…AIDG), and 953 to 972 (SKTL…TYKK). The segment covering 40–57 (RVQHVHRAQPARRHRPAR) has biased composition (basic residues). Polar residues-rich tracts occupy residues 287-302 (SPNS…SGQL) and 339-352 (VPSN…TGTA). The segment covering 413–431 (PSIASTQASPSSPTTPVTD) has biased composition (low complexity). Over residues 677–696 (GLSSTNQPPVTSSNSNVTSA) the composition is skewed to polar residues. Residues 697-706 (LTSSLGSSPK) show a composition bias toward low complexity.

This sequence belongs to the POM121 family.

This chain is POM121-like protein 2 (Pom121l2), found in Mus musculus (Mouse).